We begin with the raw amino-acid sequence, 37 residues long: Mu-agatoxin-Aa1d (37 aa).

Intrachain disulfides connect Cys2–Cys18, Cys9–Cys23, Cys17–Cys33, and Cys25–Cys31. Asn37 carries the post-translational modification Asparagine amide.

It belongs to the neurotoxin 07 (Beta/delta-agtx) family. 03 (aga-4) subfamily. Aga sub-subfamily. In terms of tissue distribution, expressed by the venom gland.

It is found in the secreted. In terms of biological role, insecticidal neurotoxin that induces an irreversible spastic paralysis when injected into insects. Modifies presynaptic voltage-gated sodium channels (Nav), causing them to open at the normal resting potential of the nerve. This leads to spontaneous release of neurotransmitter and repetitive action potentials in motor neurons. The protein is Mu-agatoxin-Aa1d of Agelenopsis aperta (North American funnel-web spider).